A 575-amino-acid polypeptide reads, in one-letter code: Phosphoenolpyruvate-protein phosphotransferase (575 aa).

The Tele-phosphohistidine intermediate role is filled by His-191. Residues Arg-298 and Arg-334 each coordinate phosphoenolpyruvate. Mg(2+) is bound by residues Glu-435 and Asp-459. Phosphoenolpyruvate is bound by residues 458 to 459 and Arg-469; that span reads ND. Residue Cys-506 is the Proton donor of the active site.

The protein belongs to the PEP-utilizing enzyme family. As to quaternary structure, homodimer. It depends on Mg(2+) as a cofactor.

The protein localises to the cytoplasm. It carries out the reaction L-histidyl-[protein] + phosphoenolpyruvate = N(pros)-phospho-L-histidyl-[protein] + pyruvate. Its function is as follows. General (non sugar-specific) component of the phosphoenolpyruvate-dependent sugar phosphotransferase system (sugar PTS). This major carbohydrate active-transport system catalyzes the phosphorylation of incoming sugar substrates concomitantly with their translocation across the cell membrane. Enzyme I transfers the phosphoryl group from phosphoenolpyruvate (PEP) to the phosphoryl carrier protein (HPr). This is Phosphoenolpyruvate-protein phosphotransferase (ptsI) from Enterococcus faecalis (strain ATCC 700802 / V583).